Reading from the N-terminus, the 574-residue chain is Putative DNA-directed RNA polymerase subunit alpha-like 1 (574 aa).

Positions 1 to 352 (MTNNKNFADW…ELFSLFLQTS (352 aa)) are alpha N-terminal domain (alpha-NTD). An alpha C-terminal domain (alpha-CTD) region spans residues 419-574 (PDYDRYNSIT…RERKRGNREF (156 aa)). The tract at residues 534–574 (QETLRKEQDEQSSQQQKDQMEKRRWERQNRERERKRGNREF) is disordered. Over residues 551–574 (DQMEKRRWERQNRERERKRGNREF) the composition is skewed to basic and acidic residues.

This sequence belongs to the RNA polymerase alpha chain family. In terms of assembly, in plastids the minimal PEP RNA polymerase catalytic core is composed of four subunits: alpha, beta, beta', and beta''. When a (nuclear-encoded) sigma factor is associated with the core the holoenzyme is formed, which can initiate transcription.

Its subcellular location is the plastid. It is found in the chloroplast. It carries out the reaction RNA(n) + a ribonucleoside 5'-triphosphate = RNA(n+1) + diphosphate. Functionally, DNA-dependent RNA polymerase catalyzes the transcription of DNA into RNA using the four ribonucleoside triphosphates as substrates. The chain is Putative DNA-directed RNA polymerase subunit alpha-like 1 (rpoAL1-A) from Pelargonium hortorum (Common geranium).